Here is a 240-residue protein sequence, read N- to C-terminus: Poxin (240 aa).

His46 functions as the Proton donor in the catalytic mechanism. Tyr181 (shared with catalytic histidine of dimeric partner) is an active-site residue. The active-site Proton acceptor; shared with catalytic histidine of dimeric partner is the Lys185.

Belongs to the poxin family. As to quaternary structure, homodimer.

It catalyses the reaction 2',3'-cGAMP + H2O = Gp(2'-5')Ap(3') + H(+). Nuclease that cleaves host 2',3'-cGAMP. The protein is Poxin (P26) of Lepidoptera (butterflies and moths).